The primary structure comprises 416 residues: Probable F-box protein At5g47300 (416 aa).

An F-box domain is found at 40-86 (TLMLSDLPGDLLEEILCRVPATSLKQLRSTCKQWNNLFNNGRFTRKH).

In Arabidopsis thaliana (Mouse-ear cress), this protein is Probable F-box protein At5g47300.